The chain runs to 302 residues: tRNA dimethylallyltransferase (302 aa).

ATP is bound at residue 7 to 14 (GPTASGKS). A substrate-binding site is contributed by 9–14 (TASGKS). 2 interaction with substrate tRNA regions span residues 32–35 (DSMQ) and 156–160 (QRILR).

This sequence belongs to the IPP transferase family. As to quaternary structure, monomer. Mg(2+) is required as a cofactor.

The enzyme catalyses adenosine(37) in tRNA + dimethylallyl diphosphate = N(6)-dimethylallyladenosine(37) in tRNA + diphosphate. In terms of biological role, catalyzes the transfer of a dimethylallyl group onto the adenine at position 37 in tRNAs that read codons beginning with uridine, leading to the formation of N6-(dimethylallyl)adenosine (i(6)A). The protein is tRNA dimethylallyltransferase of Beijerinckia indica subsp. indica (strain ATCC 9039 / DSM 1715 / NCIMB 8712).